Reading from the N-terminus, the 88-residue chain is Arminin 7965 (88 aa).

The first 18 residues, 1–18, serve as a signal peptide directing secretion; it reads MKTVFAILFLTFIAFTYA. Positions 19–57 are excised as a propeptide; it reads KSYEDVKEEIKNEVEREIFEDLEEESDVLDSNVRELNDA. Ala85 carries the alanine amide modification.

This sequence belongs to the arminin family. In terms of tissue distribution, expressed in entodermal epithelium along the body column.

Its subcellular location is the secreted. The protein localises to the target cell membrane. In terms of biological role, antimicrobial peptide with a broad-spectrum antimicrobial activity. Keeps its antibacterial activity under a wide range of salt concentrations that mimic physiological conditions of human blood, which is surprising, since Hydra is an obligate freshwater animal with nearly no salt tolerance. Does not affect red blood cells. The chain is Arminin 7965 from Hydra vulgaris (Hydra).